The chain runs to 193 residues: Holliday junction branch migration complex subunit RuvA (193 aa).

The domain I stretch occupies residues 1–63 (MIAHIQGKLV…EDSHSLYGFA (63 aa)). The interval 64 to 142 (EKSEKEIFKL…KLYDLDQVSI (79 aa)) is domain II. Residues 143 to 145 (SQS) form a flexible linker region. The tract at residues 145 to 193 (SNTNKDEALSALEVLGFIRKSAEKVVEKIVATMPDATVETIIKQALKNL) is domain III.

The protein belongs to the RuvA family. In terms of assembly, homotetramer. Forms an RuvA(8)-RuvB(12)-Holliday junction (HJ) complex. HJ DNA is sandwiched between 2 RuvA tetramers; dsDNA enters through RuvA and exits via RuvB. An RuvB hexamer assembles on each DNA strand where it exits the tetramer. Each RuvB hexamer is contacted by two RuvA subunits (via domain III) on 2 adjacent RuvB subunits; this complex drives branch migration. In the full resolvosome a probable DNA-RuvA(4)-RuvB(12)-RuvC(2) complex forms which resolves the HJ.

The protein localises to the cytoplasm. The RuvA-RuvB-RuvC complex processes Holliday junction (HJ) DNA during genetic recombination and DNA repair, while the RuvA-RuvB complex plays an important role in the rescue of blocked DNA replication forks via replication fork reversal (RFR). RuvA specifically binds to HJ cruciform DNA, conferring on it an open structure. The RuvB hexamer acts as an ATP-dependent pump, pulling dsDNA into and through the RuvAB complex. HJ branch migration allows RuvC to scan DNA until it finds its consensus sequence, where it cleaves and resolves the cruciform DNA. The protein is Holliday junction branch migration complex subunit RuvA of Flavobacterium psychrophilum (strain ATCC 49511 / DSM 21280 / CIP 103535 / JIP02/86).